The following is a 713-amino-acid chain: Peroxisomal biogenesis factor 8 (713 aa).

The segment at Met1 to Thr31 is disordered. The segment covering Gln7–Gly30 has biased composition (polar residues). Residues Ala711–Leu713 carry the Microbody targeting signal motif.

As to quaternary structure, interacts with PEX5 (via N-terminus).

The protein localises to the peroxisome membrane. Essential component of the machinery required for the import of both PTS1 and PTS2 (and perhaps all) peroxisomal matrix proteins. Binding of PEX8 to the N-terminus of PEX5 cargo receptor induces a conformational change of the TPR domains and decrease their binding affinity to cargo, facilitating the release of the PTS1 proteins within the peroxisome. This chain is Peroxisomal biogenesis factor 8, found in Komagataella phaffii (strain GS115 / ATCC 20864) (Yeast).